Here is a 430-residue protein sequence, read N- to C-terminus: Serine hydroxymethyltransferase (430 aa).

G120–I122 contributes to the (6S)-5,6,7,8-tetrahydrofolate binding site. K226 carries the post-translational modification N6-(pyridoxal phosphate)lysine.

Belongs to the SHMT family. In terms of assembly, homodimer. It depends on pyridoxal 5'-phosphate as a cofactor.

The protein localises to the cytoplasm. The protein operates within amino-acid biosynthesis; glycine biosynthesis; glycine from L-serine: step 1/1. Catalyzes the reversible interconversion of serine and glycine with a modified folate serving as the one-carbon carrier. Also exhibits a pteridine-independent aldolase activity toward beta-hydroxyamino acids, producing glycine and aldehydes, via a retro-aldol mechanism. This chain is Serine hydroxymethyltransferase, found in Pyrobaculum calidifontis (strain DSM 21063 / JCM 11548 / VA1).